A 637-amino-acid polypeptide reads, in one-letter code: 3D-(3,5/4)-trihydroxycyclohexane-1,2-dione hydrolase (637 aa).

Glu-65 is a thiamine diphosphate binding site. Positions 441–521 (SLPGDLQRLW…INVLLFDNSG (81 aa)) are thiamine pyrophosphate binding. Mg(2+) contacts are provided by Asp-492 and Asn-519.

The protein belongs to the TPP enzyme family. The cofactor is Mg(2+). Thiamine diphosphate is required as a cofactor.

It catalyses the reaction 3D-3,5/4-trihydroxycyclohexane-1,2-dione + H2O = 5-deoxy-D-glucuronate + H(+). The protein operates within polyol metabolism; myo-inositol degradation into acetyl-CoA; acetyl-CoA from myo-inositol: step 3/7. Its function is as follows. Involved in the cleavage of the C1-C2 bond of 3D-(3,5/4)-trihydroxycyclohexane-1,2-dione (THcHDO) to yield 5-deoxy-glucuronate (5DG). This chain is 3D-(3,5/4)-trihydroxycyclohexane-1,2-dione hydrolase, found in Halalkalibacterium halodurans (strain ATCC BAA-125 / DSM 18197 / FERM 7344 / JCM 9153 / C-125) (Bacillus halodurans).